The chain runs to 357 residues: Eukaryotic translation initiation factor 3 subunit F (357 aa).

An MPN domain is found at 30-169 (VHIQPQAVFS…TKAYISAPVA (140 aa)). A disordered region spans residues 309–357 (VGGDKEGGEKGKDGEDGGRGGRGGKRGGGGRGGHRGEPREPREPREPAE). Basic and acidic residues-rich tracts occupy residues 311-327 (GDKE…DGGR) and 342-357 (HRGE…EPAE).

It belongs to the eIF-3 subunit F family. As to quaternary structure, component of the eukaryotic translation initiation factor 3 (eIF-3) complex.

The protein resides in the cytoplasm. Its function is as follows. Component of the eukaryotic translation initiation factor 3 (eIF-3) complex, which is involved in protein synthesis of a specialized repertoire of mRNAs and, together with other initiation factors, stimulates binding of mRNA and methionyl-tRNAi to the 40S ribosome. The eIF-3 complex specifically targets and initiates translation of a subset of mRNAs involved in cell proliferation. This is Eukaryotic translation initiation factor 3 subunit F from Chaetomium globosum (strain ATCC 6205 / CBS 148.51 / DSM 1962 / NBRC 6347 / NRRL 1970) (Soil fungus).